The chain runs to 264 residues: uncharacterized protein (264 aa).

Residues 7 to 27 (LTLGICLVLLIILIVGYVIMT) traverse the membrane as a helical segment.

Belongs to the staphylococcal tandem lipoprotein family.

Its subcellular location is the cell membrane. This is an uncharacterized protein from Staphylococcus aureus (strain N315).